Reading from the N-terminus, the 257-residue chain is Neurotrophin-3 (257 aa).

Residues 1 to 18 (MSILFYVIFLAYLRGIQS) form the signal peptide. Positions 19–138 (TNMDQRSLPE…VLNRTSRRKR (120 aa)) are excised as a propeptide. Residue Asn131 is glycosylated (N-linked (GlcNAc...) asparagine). 3 disulfide bridges follow: Cys152–Cys217, Cys195–Cys246, and Cys205–Cys248.

This sequence belongs to the NGF-beta family. In terms of tissue distribution, in the embryo, the expression peak at E4.5 and decreases at later stages of development.

The protein localises to the secreted. Functionally, seems to promote the survival of visceral and proprioceptive sensory neurons. The protein is Neurotrophin-3 (NTF3) of Gallus gallus (Chicken).